The following is a 172-amino-acid chain: PRELI domain containing protein 3A (172 aa).

In terms of domain architecture, PRELI/MSF1 spans 1-172 (MKIWSSEHVF…IIEHSESAVS (172 aa)).

It belongs to the slowmo family. Interacts with TRIAP1.

The protein resides in the mitochondrion. In terms of biological role, in vitro, the TRIAP1:PRELID3A complex mediates the transfer of phosphatidic acid (PA) between liposomes and probably functions as a PA transporter across the mitochondrion intermembrane space. Phosphatidic acid import is required for cardiolipin (CL) synthesis in the mitochondrial inner membrane. The protein is PRELI domain containing protein 3A (PRELID3A) of Homo sapiens (Human).